The sequence spans 465 residues: MSNKMWGGRFSERPDAIMEEINVSIDVDRHLYAQDIAASKAHAAMLAAQGIVTAKDAKNIAKGLDTILSEIVAGSFDFKRALEDIHMNVESRLSELIGPAAGRLHTARSRNDQVATDFRLFVRDTIDGIDAALASYQHALATRALEHADTVMPGFTHLQTAQPVTFGHHLMAYVEMAARDRGRFRDARKRLNESPLGAAALAGTSFPIDRDATAKALGFERPMANSLDAVSDRDFVLETLAAASIAAVHLSRFAEEIVLWTSPLVGMVRLSDKFTTGSSIMPQKRNPDAAELARAKTGRVIGALTGLLIVMKGLPLAYQKDMQEDKQGAMEAFAALSLAIRAMSGMVSDLVPDPARMKQAAGEGYATATDLADWLVRELKMPFRDAHHVTGRIVGEASKQGVALHELPLAEMQAIEPRITQQALSVLSVESSVKSRVSYGGTAPKNVRAQAKAWLKRLEKEHNSG.

This sequence belongs to the lyase 1 family. Argininosuccinate lyase subfamily.

It localises to the cytoplasm. The enzyme catalyses 2-(N(omega)-L-arginino)succinate = fumarate + L-arginine. It functions in the pathway amino-acid biosynthesis; L-arginine biosynthesis; L-arginine from L-ornithine and carbamoyl phosphate: step 3/3. The chain is Argininosuccinate lyase from Rhodopseudomonas palustris (strain BisB18).